The chain runs to 198 residues: Transmembrane protein 17 (198 aa).

Asparagine 13 and asparagine 23 each carry an N-linked (GlcNAc...) asparagine glycan. The next 4 membrane-spanning stretches (helical) occupy residues 45–65 (MSLY…IMML), 78–98 (FIVV…LYLG), 110–130 (LAGF…FLLF), and 142–162 (AVHI…FLTL).

The protein belongs to the TMEM17 family. In terms of assembly, part of the tectonic-like complex (also named B9 complex).

It is found in the cell projection. It localises to the cilium membrane. Transmembrane component of the tectonic-like complex, a complex localized at the transition zone of primary cilia and acting as a barrier that prevents diffusion of transmembrane proteins between the cilia and plasma membranes. Required for ciliogenesis and sonic hedgehog/SHH signaling. In Bos taurus (Bovine), this protein is Transmembrane protein 17 (TMEM17).